The following is a 161-amino-acid chain: 2-C-methyl-D-erythritol 2,4-cyclodiphosphate synthase (161 aa).

The a divalent metal cation site is built by Asp-8 and His-10. 4-CDP-2-C-methyl-D-erythritol 2-phosphate-binding positions include 8–10 and 34–35; these read DVH and HS. Position 42 (His-42) interacts with a divalent metal cation. Residues 56-58, 61-65, 100-106, 132-135, and Phe-139 each bind 4-CDP-2-C-methyl-D-erythritol 2-phosphate; these read DIG, FPDTD, AQSPKMA, and TTEE.

The protein belongs to the IspF family. Homotrimer. It depends on a divalent metal cation as a cofactor.

The enzyme catalyses 4-CDP-2-C-methyl-D-erythritol 2-phosphate = 2-C-methyl-D-erythritol 2,4-cyclic diphosphate + CMP. The protein operates within isoprenoid biosynthesis; isopentenyl diphosphate biosynthesis via DXP pathway; isopentenyl diphosphate from 1-deoxy-D-xylulose 5-phosphate: step 4/6. Its function is as follows. Involved in the biosynthesis of isopentenyl diphosphate (IPP) and dimethylallyl diphosphate (DMAPP), two major building blocks of isoprenoid compounds. Catalyzes the conversion of 4-diphosphocytidyl-2-C-methyl-D-erythritol 2-phosphate (CDP-ME2P) to 2-C-methyl-D-erythritol 2,4-cyclodiphosphate (ME-CPP) with a corresponding release of cytidine 5-monophosphate (CMP). In Clostridioides difficile (strain 630) (Peptoclostridium difficile), this protein is 2-C-methyl-D-erythritol 2,4-cyclodiphosphate synthase.